A 243-amino-acid polypeptide reads, in one-letter code: Segregation and condensation protein A (243 aa).

This sequence belongs to the ScpA family. As to quaternary structure, component of a cohesin-like complex composed of ScpA, ScpB and the Smc homodimer, in which ScpA and ScpB bind to the head domain of Smc. The presence of the three proteins is required for the association of the complex with DNA.

It is found in the cytoplasm. Functionally, participates in chromosomal partition during cell division. May act via the formation of a condensin-like complex containing Smc and ScpB that pull DNA away from mid-cell into both cell halves. This is Segregation and condensation protein A from Staphylococcus epidermidis (strain ATCC 35984 / DSM 28319 / BCRC 17069 / CCUG 31568 / BM 3577 / RP62A).